Consider the following 110-residue polypeptide: Small ribosomal subunit protein bS16 (110 aa).

Basic and acidic residues predominate over residues 81–104 (VRPAEVLGKQKQEKERSAKKKDAA). The interval 81-110 (VRPAEVLGKQKQEKERSAKKKDAAASETSE) is disordered.

It belongs to the bacterial ribosomal protein bS16 family.

This is Small ribosomal subunit protein bS16 from Prochlorococcus marinus (strain NATL2A).